Here is a 478-residue protein sequence, read N- to C-terminus: Mannose-1-phosphate guanylyltransferase (478 aa).

The protein belongs to the mannose-6-phosphate isomerase type 2 family.

The enzyme catalyses alpha-D-mannose 1-phosphate + GTP + H(+) = GDP-alpha-D-mannose + diphosphate. The protein operates within nucleotide-sugar biosynthesis; GDP-alpha-D-mannose biosynthesis; GDP-alpha-D-mannose from alpha-D-mannose 1-phosphate (GTP route): step 1/1. In terms of biological role, involved in the biosynthesis of the capsular polysaccharide colanic acid. In Escherichia coli (strain K12), this protein is Mannose-1-phosphate guanylyltransferase (manC).